Here is a 186-residue protein sequence, read N- to C-terminus: EF-hand protein 5 (186 aa).

The disordered stretch occupies residues 1-23 (MSRSKEVSPNLSQQKRGDVRSAG). EF-hand domains lie at 41 to 76 (SAELQEGYRILTGGQKANIISDKDLFKAIHSCGLHT), 77 to 112 (SEEEVNDLLRVVHQDERTLGLEFPEFMMLMTKGIDE), 113 to 148 (ASIAEMRRPFSVLDKAKTGVITKKQFTELFVSSGEH), and 149 to 186 (SSAEELEELMLLAETSEELEVVDYNKLINELAILLNKM). 3 residues coordinate Ca(2+): glutamate 98, aspartate 126, and threonine 130.

In Leishmania tarentolae (Sauroleishmania tarentolae), this protein is EF-hand protein 5.